A 748-amino-acid polypeptide reads, in one-letter code: Disintegrin and metalloproteinase domain-containing protein 10 (748 aa).

An N-terminal signal peptide occupies residues methionine 1–glycine 19. Positions glutamine 20–arginine 213 are excised as a propeptide. At glutamine 20–glutamate 672 the chain is on the extracellular side. Residues glycine 171 to valine 178 carry the Cysteine switch motif. Zn(2+) is bound at residue cysteine 173. In terms of domain architecture, Peptidase M12B spans asparagine 220 to glycine 456. N-linked (GlcNAc...) asparagine glycosylation is found at asparagine 267 and asparagine 278. 16 cysteine pairs are disulfide-bonded: cysteine 344-cysteine 451, cysteine 399-cysteine 435, cysteine 460-cysteine 495, cysteine 471-cysteine 484, cysteine 473-cysteine 479, cysteine 483-cysteine 515, cysteine 503-cysteine 511, cysteine 510-cysteine 536, cysteine 524-cysteine 543, cysteine 530-cysteine 562, cysteine 555-cysteine 567, cysteine 572-cysteine 598, cysteine 580-cysteine 607, cysteine 582-cysteine 597, cysteine 594-cysteine 639, and cysteine 632-cysteine 645. A Zn(2+)-binding site is contributed by histidine 383. Residue glutamate 384 is part of the active site. Histidine 387 and histidine 393 together coordinate Zn(2+). Asparagine 439 carries an N-linked (GlcNAc...) asparagine glycan. The Disintegrin domain maps to glutamine 457–asparagine 551. An N-linked (GlcNAc...) asparagine glycan is attached at asparagine 551. A helical transmembrane segment spans residues tryptophan 673–isoleucine 696. At lysine 697–arginine 748 the chain is on the cytoplasmic side. A disordered region spans residues proline 704–arginine 748. The SH3-binding signature appears at proline 708–proline 715. Threonine 719 carries the phosphothreonine modification. The SH3-binding motif lies at arginine 722–proline 728. Residues arginine 734–arginine 748 are interaction with AP2A1, AP2A2 and AP2M1.

As to quaternary structure, forms a ternary EFNA5-EPHA3-ADAM10 complex mediating EFNA5 extracellular domain shedding by ADAM10 which regulates the EFNA5-EPHA3 complex internalization and function, the cleavage occurs in trans, with ADAM10 and its substrate being on the membranes of opposing cells. Interacts with the clathrin adapter AP2 complex subunits AP2A1, AP2A2, AP2B1, and AP2M1; this interaction facilitates ADAM10 endocytosis from the plasma membrane during long-term potentiation in hippocampal neurons. Forms a ternary complex composed of ADAM10, EPHA4 and CADH1; within the complex, ADAM10 cleaves CADH1 which disrupts adherens junctions. Interacts with EPHA2. Interacts with NGF in a divalent cation-dependent manner. Interacts with TSPAN14; the interaction promotes ADAM10 maturation and cell surface expression. Interacts with TSPAN5, TSPAN10, TSPAN14, TSPAN15, TSPAN17 and TSPAN33; these interactions regulate ADAM10 substrate specificity, endocytosis and turnover. Interacts (via extracellular domain) with TSPAN33 (via extracellular domain) and (via cytoplasmic domain) with AFDN; interaction with TSPAN33 allows the docking of ADAM10 to zonula adherens through a PDZ11-dependent interaction between TSPAN33 and PLEKHA7 while interaction with AFDN locks ADAM10 at zonula adherens. Interacts with DLG1; this interaction recruits ADAM10 to the cell membrane during long-term depression in hippocampal neurons. Interacts (via extracellular domain) with BACE1 (via extracellular domain). Interacts with FAM171A1. The cofactor is Zn(2+). The precursor is cleaved by furin and PCSK7. Expressed at low level in kidney, spleen, lung, adrenal, heart and peripheral nerve.

The protein resides in the golgi apparatus membrane. It is found in the cell membrane. Its subcellular location is the cytoplasmic vesicle. It localises to the clathrin-coated vesicle. The protein localises to the cell projection. The protein resides in the axon. It is found in the dendrite. Its subcellular location is the cell junction. It localises to the adherens junction. The protein localises to the cytoplasm. It catalyses the reaction Endopeptidase of broad specificity.. With respect to regulation, catalytically inactive when the propeptide is intact and associated with the mature enzyme. The disintegrin and cysteine-rich regions modulate access of substrates to exerts an inhibitory effect on the cleavage of ADAM10 substrates. Functionally, transmembrane metalloprotease which mediates the ectodomain shedding of a myriad of transmembrane proteins, including adhesion proteins, growth factor precursors and cytokines being essential for development and tissue homeostasis. Associates with six members of the tetraspanin superfamily TspanC8 which regulate its exit from the endoplasmic reticulum and its substrate selectivity. Cleaves the membrane-bound precursor of TNF-alpha at '76-Ala-|-Val-77' to its mature soluble form. Responsible for the proteolytical release of soluble JAM3 from endothelial cells surface. Responsible for the proteolytic release of several other cell-surface proteins, including heparin-binding epidermal growth-like factor, ephrin-A2, CD44, CDH2 and for constitutive and regulated alpha-secretase cleavage of amyloid precursor protein (APP). Contributes to the normal cleavage of the cellular prion protein. Involved in the cleavage of the adhesion molecule L1 at the cell surface and in released membrane vesicles, suggesting a vesicle-based protease activity. Also controls the proteolytic processing of Notch and mediates lateral inhibition during neurogenesis. Required for the development of type 1 transitional B cells into marginal zone B cells, probably by cleaving Notch. Responsible for the FasL ectodomain shedding and for the generation of the remnant ADAM10-processed FasL (FasL APL) transmembrane form. Also cleaves the ectodomain of the integral membrane proteins CORIN and ITM2B. Mediates the proteolytic cleavage of LAG3, leading to release the secreted form of LAG3. Mediates the proteolytic cleavage of IL6R and IL11RA, leading to the release of secreted forms of IL6R and IL11RA. Enhances the cleavage of CHL1 by BACE1. Cleaves NRCAM. Cleaves TREM2, resulting in shedding of the TREM2 ectodomain. Involved in the development and maturation of glomerular and coronary vasculature. During development of the cochlear organ of Corti, promotes pillar cell separation by forming a ternary complex with CADH1 and EPHA4 and cleaving CADH1 at adherens junctions. May regulate the EFNA5-EPHA3 signaling. Regulates leukocyte transmigration as a sheddase for the adherens junction protein VE-cadherin/CDH5 in endothelial cells. This Bos taurus (Bovine) protein is Disintegrin and metalloproteinase domain-containing protein 10 (ADAM10).